The primary structure comprises 176 residues: Large ribosomal subunit protein uL6 (176 aa).

This sequence belongs to the universal ribosomal protein uL6 family. As to quaternary structure, part of the 50S ribosomal subunit.

In terms of biological role, this protein binds to the 23S rRNA, and is important in its secondary structure. It is located near the subunit interface in the base of the L7/L12 stalk, and near the tRNA binding site of the peptidyltransferase center. The sequence is that of Large ribosomal subunit protein uL6 from Shewanella sediminis (strain HAW-EB3).